The primary structure comprises 173 residues: Transcription factor E (173 aa).

Positions Pro6–Asn89 constitute an HTH TFE/IIEalpha-type domain.

This sequence belongs to the TFE family. Monomer. Interaction with RNA polymerase subunits RpoF and RpoE is necessary for Tfe stimulatory transcription activity. Able to interact with Tbp and RNA polymerase in the absence of DNA promoter. Interacts both with the preinitiation and elongation complexes.

Functionally, transcription factor that plays a role in the activation of archaeal genes transcribed by RNA polymerase. Facilitates transcription initiation by enhancing TATA-box recognition by TATA-box-binding protein (Tbp), and transcription factor B (Tfb) and RNA polymerase recruitment. Not absolutely required for transcription in vitro, but particularly important in cases where Tbp or Tfb function is not optimal. It dynamically alters the nucleic acid-binding properties of RNA polymerases by stabilizing the initiation complex and destabilizing elongation complexes. Seems to translocate with the RNA polymerase following initiation and acts by binding to the non template strand of the transcription bubble in elongation complexes. This chain is Transcription factor E, found in Ignicoccus hospitalis (strain KIN4/I / DSM 18386 / JCM 14125).